A 426-amino-acid chain; its full sequence is Histidine--tRNA ligase (426 aa).

The protein belongs to the class-II aminoacyl-tRNA synthetase family. In terms of assembly, homodimer.

It is found in the cytoplasm. It catalyses the reaction tRNA(His) + L-histidine + ATP = L-histidyl-tRNA(His) + AMP + diphosphate + H(+). The chain is Histidine--tRNA ligase from Lactiplantibacillus plantarum (strain ATCC BAA-793 / NCIMB 8826 / WCFS1) (Lactobacillus plantarum).